The primary structure comprises 706 residues: G2/M phase-specific E3 ubiquitin-protein ligase (706 aa).

The C2HC pre-PHD-type zinc finger occupies 11–51; sequence NLACVFCRKHDDCPNKYGEKKTKEKWNLTVHYYCLLMSSGI. The segment at 79 to 128 adopts a PHD-type 1 zinc-finger fold; that stretch reads LKCCVCKKNGASIGCVAPRCKRSYHFPCGLQRECIFQFTGNFASFCWDHR. A PHD-type 2; degenerate zinc finger spans residues 143–193; it reads PCTICLEFIEPIPSYNILRSPCCKNAWFHRDCLQVQAINAGVFFFRCTICN. The PHD-type 3 zinc-finger motif lies at 237-286; sequence RCRCKEGRDYNAPDSKWEIKRCQCCGSSGTHLACSSLRSWEQNWECLECR. The HECT domain occupies 371–698; it reads IWNSALDAFR…IRNTLRLEKE (328 aa).

In terms of tissue distribution, predominantly expressed in brain, liver, kidney, testes and ovary.

Its subcellular location is the nucleus. The protein resides in the nucleolus. It is found in the cytoplasm. It carries out the reaction S-ubiquitinyl-[E2 ubiquitin-conjugating enzyme]-L-cysteine + [acceptor protein]-L-lysine = [E2 ubiquitin-conjugating enzyme]-L-cysteine + N(6)-ubiquitinyl-[acceptor protein]-L-lysine.. It participates in protein modification; protein ubiquitination. E3 ubiquitin-protein ligase which accepts ubiquitin from an E2 ubiquitin-conjugating enzyme in the form of a thioester and then directly transfers the ubiquitin to targeted substrates. Essential in early embryonic development to prevent apoptotic death. The sequence is that of G2/M phase-specific E3 ubiquitin-protein ligase (G2E3) from Homo sapiens (Human).